A 415-amino-acid chain; its full sequence is MRLSLTKVVNGCRLGKIINLGKTGDHTMDIPGCLLYTKTGSAPHLTHHTLHNIHGVPAMAQLTLSSLAEHHEVLREYKEGVGKFIGMPESLLYCSLHDPVSPCPAGYVTNKSVSVWSVAGRVEMTVSKFMAIQQALQPDWFQCLSDGEVSCKEATSIKRVRKSVDRSLLFLDNCLRLQEESEVLQKSVIIGVIEGGDVMEERLRSARETAKRPVGGFLLDGFQGNPTTLETRLRLLSSVTAELPEDKPRLISGVSRPDEVLECIERGVDLFESFFPYQVTERGCALTFSFDYQPNPEETLLQQNGTQEEIKCMDQIKKMETTGCNQEITSFEINLKEKKYQEDFNPLVRGCSCYCCKNHTRAYIHHLLVTNELLAGVLLMMHNFEHYFGFFHYIREALKSDKLAQLKELIHRQAS.

The Zn(2+) site is built by C351, C353, C356, and H382.

This sequence belongs to the queuine tRNA-ribosyltransferase family. QTRT2 subfamily. Heterodimer of a catalytic subunit QTRT1 and an accessory subunit QTRT2. Zn(2+) serves as cofactor.

It localises to the cytoplasm. It is found in the mitochondrion outer membrane. Non-catalytic subunit of the queuine tRNA-ribosyltransferase (TGT) that catalyzes the base-exchange of a guanine (G) residue with queuine (Q) at position 34 (anticodon wobble position) in tRNAs with GU(N) anticodons (tRNA-Asp, -Asn, -His and -Tyr), resulting in the hypermodified nucleoside queuosine (7-(((4,5-cis-dihydroxy-2-cyclopenten-1-yl)amino)methyl)-7-deazaguanosine). This chain is Queuine tRNA-ribosyltransferase accessory subunit 2, found in Pongo abelii (Sumatran orangutan).